The chain runs to 173 residues: Alpha-crystallin A chain (173 aa).

At Met-1 the chain carries N-acetylmethionine. Positions 1 to 63 (MDIAIQQPWF…RTVLDSGVSE (63 aa)) are required for complex formation with BFSP1 and BFSP2. Gln-6 is modified (deamidated glutamine; partial). Ser-45 carries the phosphoserine modification. At Gln-50 the chain carries Deamidated glutamine; partial. In terms of domain architecture, sHSP spans 52–162 (LFRTVLDSGV…GHSERAIPVS (111 aa)). N6-acetyllysine is present on residues Lys-70 and Lys-99. His-100 lines the Zn(2+) pocket. Asn-101 carries the deamidated asparagine; partial modification. Zn(2+)-binding residues include Glu-102 and His-107. Ser-122 is modified (phosphoserine). Asn-123 bears the Deamidated asparagine; partial mark. The disordered stretch occupies residues 144–173 (PKVPSGVDAGHSERAIPVSREEKPSSAPSS). Residues 153 to 167 (GHSERAIPVSREEKP) are compositionally biased toward basic and acidic residues. Zn(2+) is bound at residue His-154. Residue Ser-162 is glycosylated (O-linked (GlcNAc) serine).

This sequence belongs to the small heat shock protein (HSP20) family. Heteromer composed of three CRYAA and one CRYAB subunits. Inter-subunit bridging via zinc ions enhances stability, which is crucial as there is no protein turn over in the lens. Can also form homodimers and homotetramers (dimers of dimers) which serve as the building blocks of homooligomers. Within homooligomers, the zinc-binding motif is created from residues of 3 different molecules. His-100 and Glu-102 from one molecule are ligands of the zinc ion, and His-107 and His-154 residues from additional molecules complete the site with tetrahedral coordination geometry. Part of a complex required for lens intermediate filament formation composed of BFSP1, BFSP2 and CRYAA. Post-translationally, acetylation at Lys-70 may increase chaperone activity. Undergoes age-dependent proteolytical cleavage at the C-terminus.

The protein resides in the cytoplasm. The protein localises to the nucleus. Functionally, contributes to the transparency and refractive index of the lens. Acts as a chaperone, preventing aggregation of various proteins under a wide range of stress conditions. Required for the correct formation of lens intermediate filaments as part of a complex composed of BFSP1, BFSP2 and CRYAA. This is Alpha-crystallin A chain (CRYAA) from Neovison vison (American mink).